A 312-amino-acid polypeptide reads, in one-letter code: uncharacterized protein (312 aa).

Active-site charge relay system residues include Ser200, Asp261, and His292.

The protein belongs to the AB hydrolase superfamily. AB hydrolase 2 family.

This is an uncharacterized protein from Acanthamoeba polyphaga mimivirus (APMV).